A 202-amino-acid polypeptide reads, in one-letter code: Endothelin-1 (202 aa).

The first 25 residues, 1–25, serve as a signal peptide directing secretion; the sequence is MDYFPMIFALLFVAFQGAPEAAVLG. A propeptide spanning residues 26-50 is cleaved from the precursor; the sequence is TELSAGAEDGGEKPAPATPWRPRRS. Cystine bridges form between Cys-53–Cys-67 and Cys-55–Cys-63. Positions 74–202 are excised as a propeptide; it reads VNTPEHVVPY…DKKVIYNRAH (129 aa). The segment at 110 to 124 is endothelin-like; that stretch reads CQCASQTDKKCWNFC.

This sequence belongs to the endothelin/sarafotoxin family.

It is found in the secreted. Endothelins are endothelium-derived vasoconstrictor peptides. Probable ligand for G-protein coupled receptors EDNRA and EDNRB which activates PTK2B, BCAR1, BCAR3 and, GTPases RAP1 and RHOA cascade in glomerular mesangial cells. Also binds the DEAR/FBXW7-AS1 receptor. Promotes mesenteric arterial wall remodeling via activation of ROCK signaling and subsequent colocalization of NFATC3 with F-actin filaments. NFATC3 then translocates to the nucleus where it subsequently promotes the transcription of the smooth muscle hypertrophy and differentiation marker ACTA2. The polypeptide is Endothelin-1 (EDN1) (Bos taurus (Bovine)).